Reading from the N-terminus, the 182-residue chain is Transcription repressor OFP11 (182 aa).

The disordered stretch occupies residues proline 62–serine 94. The OVATE domain occupies methionine 104–tryptophan 169.

Expressed in roots, rosette and cauline leaves, shoots, stems, flower buds and siliques.

The protein localises to the nucleus. Functionally, transcriptional repressor that may regulate multiple aspects of plant growth and development through the regulation of BEL1-LIKE (BLH) and KNOX TALE (KNAT) homeodomain transcription factors. The polypeptide is Transcription repressor OFP11 (OFP11) (Arabidopsis thaliana (Mouse-ear cress)).